A 154-amino-acid chain; its full sequence is Xanthine-guanine phosphoribosyltransferase (154 aa).

5-phospho-alpha-D-ribose 1-diphosphate contacts are provided by residues 37 to 38 (RG), arginine 69, and 88 to 96 (EDLVDSGDT). Arginine 69 provides a ligand contact to GMP. Residue aspartate 89 coordinates Mg(2+). 2 residues coordinate guanine: aspartate 92 and isoleucine 135. Xanthine contacts are provided by aspartate 92 and isoleucine 135. Residues 92-96 (DSGDT) and 134-135 (WI) each bind GMP.

Belongs to the purine/pyrimidine phosphoribosyltransferase family. XGPT subfamily. Homotetramer. Mg(2+) is required as a cofactor.

It is found in the cell inner membrane. It carries out the reaction GMP + diphosphate = guanine + 5-phospho-alpha-D-ribose 1-diphosphate. It catalyses the reaction XMP + diphosphate = xanthine + 5-phospho-alpha-D-ribose 1-diphosphate. The enzyme catalyses IMP + diphosphate = hypoxanthine + 5-phospho-alpha-D-ribose 1-diphosphate. Its pathway is purine metabolism; GMP biosynthesis via salvage pathway; GMP from guanine: step 1/1. It functions in the pathway purine metabolism; XMP biosynthesis via salvage pathway; XMP from xanthine: step 1/1. In terms of biological role, purine salvage pathway enzyme that catalyzes the transfer of the ribosyl-5-phosphate group from 5-phospho-alpha-D-ribose 1-diphosphate (PRPP) to the N9 position of the 6-oxopurines guanine and xanthine to form the corresponding ribonucleotides GMP (guanosine 5'-monophosphate) and XMP (xanthosine 5'-monophosphate), with the release of PPi. To a lesser extent, also acts on hypoxanthine. This is Xanthine-guanine phosphoribosyltransferase from Vibrio vulnificus (strain CMCP6).